A 222-amino-acid polypeptide reads, in one-letter code: uncharacterized protein (222 aa).

The tract at residues 142-222 is disordered; it reads ARRGGCVHPP…LPDPPSAGHL (81 aa). Low complexity predominate over residues 160-169; the sequence is QSRSISSRRA. Residues 182 to 196 are compositionally biased toward basic residues; sequence PRRRPHRHRTRPQTR.

Belongs to the Rv1128c/1148c/1588c/1702c/1945/3466 family.

This is an uncharacterized protein from Mycobacterium tuberculosis (strain ATCC 25618 / H37Rv).